A 1372-amino-acid polypeptide reads, in one-letter code: Collagen alpha-2(I) chain (1372 aa).

Positions 1 to 22 are cleaved as a signal peptide; the sequence is MLSFVDTRTLLLLAVTSCLATC. Gln-23 is modified (pyrrolidone carboxylic acid). A propeptide spans 23 to 85 (N-terminal propeptide); the sequence is QSLQMGSVRK…PPGLTGNFAA (63 aa). The segment at 28-1135 is disordered; the sequence is GSVRKGPTGD…DQPRSQPSLR (1108 aa). Residues 59-77 are compositionally biased toward pro residues; sequence VGPPGPPGAPGPPGPPGPP. Gln-86 bears the Pyrrolidone carboxylic acid mark. Allysine is present on Lys-90. Over residues 95–146 the composition is skewed to low complexity; the sequence is GPGPMGLMGPRGPPGAVGAPGPQGFQGPAGEPGEPGQTGPAGSRGPAGPPGK. Basic and acidic residues predominate over residues 147–161; that stretch reads AGEDGHPGKPGRPGE. Lys-183 bears the 5-hydroxylysine; alternate mark. Residue Lys-183 is glycosylated (O-linked (Gal...) hydroxylysine; alternate). Composition is skewed to low complexity over residues 231–260, 285–299, 306–327, 336–348, 390–416, 476–495, and 519–537; these read VGAP…SAGP, AGPR…LSGP, PGAN…AGAP, PGPV…TGPR, PGEP…LPGA, LPGI…RGEA, and PGLA…NGAQ. Over residues 544–553 the composition is skewed to gly residues; that stretch reads GVQGGKGEQG. Positions 600–639 are enriched in low complexity; sequence PGESGAAGPSGPIGIRGPSGAPGPDGNKGEAGAVGAPGSA. A compositionally biased stretch (gly residues) spans 640–649; the sequence is GASGPGGLPG. Composition is skewed to low complexity over residues 674 to 716 and 725 to 743; these read NPGR…PRGS and PAGP…QPGA. Over residues 744–753 the composition is skewed to basic and acidic residues; it reads KGEKGTKGPK. A compositionally biased stretch (low complexity) spans 755-771; sequence ENGIVGPTGPVGAAGPS. Over residues 781–790 the composition is skewed to gly residues; it reads GSRGDGGPPG. The short motif at 783 to 785 is the Cell attachment site element; the sequence is RGD. A compositionally biased stretch (low complexity) spans 792 to 801; the sequence is TGFPGAAGRT. Residues 828-830 carry the Cell attachment site motif; it reads RGD. 4 stretches are compositionally biased toward low complexity: residues 855–882, 891–927, 957–978, and 987–1007; these read SGEP…LGLP, PGIA…NGAP, PGNI…VGPA, and PGPA…PSGP. The Cell attachment site motif lies at 1011 to 1013; it reads RGD. Residues 1011–1022 are compositionally biased toward basic and acidic residues; that stretch reads RGDKGEPGDKGA. A compositionally biased stretch (pro residues) spans 1095 to 1107; the sequence is AGPPGPPGPPGPP. The segment covering 1108 to 1120 has biased composition (gly residues); the sequence is GVSGGGYDFGFEG. A propeptide spans 1126 to 1372 (C-terminal propeptide); sequence DQPRSQPSLR…RVEVGPVCFK (247 aa). The Fibrillar collagen NC1 domain occupies 1139-1372; the sequence is YEVDATLKSL…RVEVGPVCFK (234 aa). Intrachain disulfides connect Cys-1169–Cys-1201, Cys-1209–Cys-1370, and Cys-1278–Cys-1323. Residues Asp-1187, Asn-1189, Gln-1190, Cys-1192, and Asp-1195 each coordinate Ca(2+). The N-linked (GlcNAc...) asparagine glycan is linked to Asn-1273.

The protein belongs to the fibrillar collagen family. As to quaternary structure, trimers of one alpha 2(I) and two alpha 1(I) chains. Interacts (via C-terminus) with TMEM131 (via PapD-L domain); the interaction is direct and is involved in assembly and TRAPPIII ER-to-Golgi transport complex-dependent secretion of collagen. Proline residues at the third position of the tripeptide repeating unit (G-X-P) are hydroxylated in some or all of the chains. Proline residues at the second position of the tripeptide repeating unit (G-P-X) are hydroxylated in some of the chains. Forms the fibrils of tendon, ligaments and bones. In bones the fibrils are mineralized with calcium hydroxyapatite. Expressed in flagella of epididymal sperm.

It is found in the secreted. The protein localises to the extracellular space. The protein resides in the extracellular matrix. Functionally, type I collagen is a member of group I collagen (fibrillar forming collagen). The sequence is that of Collagen alpha-2(I) chain (Col1a2) from Rattus norvegicus (Rat).